We begin with the raw amino-acid sequence, 245 residues long: MGGQKTHFGFSTVNEDEKAGKVAEVFHSVAKNYDIMNDVMSAGLHRVWKHFTIHTAHLKKGDKVLDIAGGTGDLSRGWAKRVGKEGEVWLTDINSSMLTVGRDRLLNEGMILPVSLADAEKLPFPDNYFNLVSVAFGLRNMTYKDAALKEMYRVLKPGGTLLVLEFSKIYKPLEGAYDFYSFKLLPVMGRLIAKDADSYQYLAESIRMHPDQETLKQMMLDAGFDSVDYHNMSAGIVALHKGVKF.

S-adenosyl-L-methionine is bound by residues Thr-71, Asp-92, and 118–119 (DA).

This sequence belongs to the class I-like SAM-binding methyltransferase superfamily. MenG/UbiE family.

It carries out the reaction a 2-demethylmenaquinol + S-adenosyl-L-methionine = a menaquinol + S-adenosyl-L-homocysteine + H(+). It catalyses the reaction a 2-methoxy-6-(all-trans-polyprenyl)benzene-1,4-diol + S-adenosyl-L-methionine = a 5-methoxy-2-methyl-3-(all-trans-polyprenyl)benzene-1,4-diol + S-adenosyl-L-homocysteine + H(+). It participates in quinol/quinone metabolism; menaquinone biosynthesis; menaquinol from 1,4-dihydroxy-2-naphthoate: step 2/2. It functions in the pathway cofactor biosynthesis; ubiquinone biosynthesis. Functionally, methyltransferase required for the conversion of demethylmenaquinol (DMKH2) to menaquinol (MKH2) and the conversion of 2-polyprenyl-6-methoxy-1,4-benzoquinol (DDMQH2) to 2-polyprenyl-3-methyl-6-methoxy-1,4-benzoquinol (DMQH2). This Neisseria gonorrhoeae (strain ATCC 700825 / FA 1090) protein is Ubiquinone/menaquinone biosynthesis C-methyltransferase UbiE.